Here is a 426-residue protein sequence, read N- to C-terminus: Tyrosine--tRNA ligase (426 aa).

Residue Tyr35 coordinates L-tyrosine. Positions 40 to 49 match the 'HIGH' region motif; the sequence is PTAPSLHIGH. Residues Tyr174 and Gln178 each coordinate L-tyrosine. Residues 234–238 carry the 'KMSKS' region motif; that stretch reads KFGKT. Residue Lys237 coordinates ATP. An S4 RNA-binding domain is found at 358-418; it reads PRVVDALVAT…WAVIRRGRRA (61 aa).

It belongs to the class-I aminoacyl-tRNA synthetase family. TyrS type 1 subfamily. As to quaternary structure, homodimer.

The protein resides in the cytoplasm. The enzyme catalyses tRNA(Tyr) + L-tyrosine + ATP = L-tyrosyl-tRNA(Tyr) + AMP + diphosphate + H(+). Its function is as follows. Catalyzes the attachment of tyrosine to tRNA(Tyr) in a two-step reaction: tyrosine is first activated by ATP to form Tyr-AMP and then transferred to the acceptor end of tRNA(Tyr). This chain is Tyrosine--tRNA ligase, found in Acidothermus cellulolyticus (strain ATCC 43068 / DSM 8971 / 11B).